We begin with the raw amino-acid sequence, 674 residues long: Xaa-Pro aminopeptidase 2 (674 aa).

The signal sequence occupies residues 1 to 22 (MAQAYWQCYPWLVLLCACAWSY). N-linked (GlcNAc...) asparagine glycosylation is present at asparagine 65. Residue arginine 116 coordinates substrate. 3 N-linked (GlcNAc...) asparagine glycosylation sites follow: asparagine 270, asparagine 278, and asparagine 293. A substrate-binding site is contributed by histidine 430. Zn(2+) contacts are provided by aspartate 450, aspartate 461, and histidine 524. Substrate is bound by residues histidine 524, histidine 533, and glutamate 555. Zn(2+) contacts are provided by glutamate 555 and glutamate 569. Alanine 650 carries the GPI-anchor amidated alanine lipid modification. Residues 651-674 (RAPHIISWTSLWVASALAILSWSS) constitute a propeptide, removed in mature form.

This sequence belongs to the peptidase M24B family. As to quaternary structure, homotrimer. The cofactor is Zn(2+). N-glycosylated. Strongly expressed in small intestine, heart and lung. Also detected in testis, skeletal muscle, spleen, liver, kidney, brain, uterus, eye, lymph node, thymus, stomach, prostate and bone marrow.

The protein resides in the cell membrane. It carries out the reaction Release of any N-terminal amino acid, including proline, that is linked to proline, even from a dipeptide or tripeptide.. Its function is as follows. Membrane-bound metalloprotease which catalyzes the removal of a penultimate prolyl residue from the N-termini of peptides, such as Arg-Pro-Pro. May play a role in the metabolism of the vasodilator bradykinin. The sequence is that of Xaa-Pro aminopeptidase 2 from Mus musculus (Mouse).